The chain runs to 800 residues: Nucleolar complex protein 3 homolog (800 aa).

Composition is skewed to basic residues over residues 1–19 (MGPA…RKLL) and 42–53 (KKQRKEQRKLHK). 2 disordered regions span residues 1-91 (MGPA…TDMM) and 167-197 (KPVL…SAPL). Residues 65–74 (PLERYKKRPE) show a composition bias toward basic and acidic residues. The stretch at 449–490 (SFKEKRKNLSRMQRKWKKAEEKLQKELLEAEATESKEKKIKL) forms a coiled coil. Positions 780 to 800 (LQEEPEQMSLDFTSPHTQQEP) are disordered. The span at 789–800 (LDFTSPHTQQEP) shows a compositional bias: polar residues.

It belongs to the CBF/MAK21 family.

The protein resides in the nucleus. Its subcellular location is the nucleolus. In Danio rerio (Zebrafish), this protein is Nucleolar complex protein 3 homolog (noc3l).